Consider the following 158-residue polypeptide: 2-C-methyl-D-erythritol 2,4-cyclodiphosphate synthase (158 aa).

A divalent metal cation-binding residues include aspartate 9 and histidine 11. 4-CDP-2-C-methyl-D-erythritol 2-phosphate contacts are provided by residues aspartate 9–histidine 11 and histidine 35–serine 36. Residue histidine 43 participates in a divalent metal cation binding. Residues aspartate 57 to glycine 59, phenylalanine 62 to aspartate 66, alanine 101 to alanine 107, threonine 133 to glutamate 136, phenylalanine 140, and arginine 143 contribute to the 4-CDP-2-C-methyl-D-erythritol 2-phosphate site.

This sequence belongs to the IspF family. As to quaternary structure, homotrimer. It depends on a divalent metal cation as a cofactor.

It catalyses the reaction 4-CDP-2-C-methyl-D-erythritol 2-phosphate = 2-C-methyl-D-erythritol 2,4-cyclic diphosphate + CMP. It functions in the pathway isoprenoid biosynthesis; isopentenyl diphosphate biosynthesis via DXP pathway; isopentenyl diphosphate from 1-deoxy-D-xylulose 5-phosphate: step 4/6. Its function is as follows. Involved in the biosynthesis of isopentenyl diphosphate (IPP) and dimethylallyl diphosphate (DMAPP), two major building blocks of isoprenoid compounds. Catalyzes the conversion of 4-diphosphocytidyl-2-C-methyl-D-erythritol 2-phosphate (CDP-ME2P) to 2-C-methyl-D-erythritol 2,4-cyclodiphosphate (ME-CPP) with a corresponding release of cytidine 5-monophosphate (CMP). In Bacillus velezensis (strain DSM 23117 / BGSC 10A6 / LMG 26770 / FZB42) (Bacillus amyloliquefaciens subsp. plantarum), this protein is 2-C-methyl-D-erythritol 2,4-cyclodiphosphate synthase.